Consider the following 283-residue polypeptide: MKQYLDLCQRIVDQGVWVENERTGKRCLTVINADLTYDVANNQFPLVTTRKSFWKAAVAELLGYIRGYDNAEDFRKLGTKTWDANANLNDAWLNNPYRKGEDDMGRVYGVQGRAWAKPDGGHIDQLRKIVDDLTRGVDDRGEILNFYNPGEFHMGCLRPCMYSHHFSLLDDTLYLNSTQRSCDVPLGLNFNMVQVYVFLAIMAQITGKKPGQAFHKIVNAHIYEDQLELMRDVQLKREPLQAPTFHINPEIKSLEDLETWVTLDDFWVEGYEHHDPIRYPFSV.

Residue arginine 22 participates in dUMP binding. Cysteine 160 (nucleophile) is an active-site residue. DUMP-binding positions include arginine 180–aspartate 183, asparagine 191, and histidine 221–tyrosine 223. Residue aspartate 183 participates in (6R)-5,10-methylene-5,6,7,8-tetrahydrofolate binding. Position 282 (serine 282) interacts with (6R)-5,10-methylene-5,6,7,8-tetrahydrofolate.

The protein belongs to the thymidylate synthase family. Bacterial-type ThyA subfamily. As to quaternary structure, homodimer.

It localises to the cytoplasm. The catalysed reaction is dUMP + (6R)-5,10-methylene-5,6,7,8-tetrahydrofolate = 7,8-dihydrofolate + dTMP. The protein operates within pyrimidine metabolism; dTTP biosynthesis. Functionally, catalyzes the reductive methylation of 2'-deoxyuridine-5'-monophosphate (dUMP) to 2'-deoxythymidine-5'-monophosphate (dTMP) while utilizing 5,10-methylenetetrahydrofolate (mTHF) as the methyl donor and reductant in the reaction, yielding dihydrofolate (DHF) as a by-product. This enzymatic reaction provides an intracellular de novo source of dTMP, an essential precursor for DNA biosynthesis. This chain is Thymidylate synthase, found in Vibrio parahaemolyticus serotype O3:K6 (strain RIMD 2210633).